A 282-amino-acid polypeptide reads, in one-letter code: MKIVRTIAELRQHLSAYKHPAFVPTMGNLHEGHLSLLRQAKPLGDVLVASIFVNRLQFLPHEDFDTYPRTWEADCQALQAAGCDVLFAPGEQELYPEPQTYRVQPPAELADILEGHFRPGFFVGVSTVVMKLFACVQPRVAVFGQKDYQQLMVIRGMVRQFALPIAVLGVATLRAADGLALSSRNNYLTPLERAEAVHLSQSLQQMAKALRAGTVDIAALEQQAMVDLTARGWQPDYLAARRRADLQVPAADEVAALVQNDGLVLLGAARIGNTRLIDNLEV.

26–33 (MGNLHEGH) serves as a coordination point for ATP. H33 serves as the catalytic Proton donor. Q57 lines the (R)-pantoate pocket. Q57 provides a ligand contact to beta-alanine. Residue 144–147 (GQKD) participates in ATP binding. Q150 is a binding site for (R)-pantoate. ATP is bound by residues L173 and 181 to 184 (LSSR).

Belongs to the pantothenate synthetase family. As to quaternary structure, homodimer.

The protein resides in the cytoplasm. It catalyses the reaction (R)-pantoate + beta-alanine + ATP = (R)-pantothenate + AMP + diphosphate + H(+). It participates in cofactor biosynthesis; (R)-pantothenate biosynthesis; (R)-pantothenate from (R)-pantoate and beta-alanine: step 1/1. In terms of biological role, catalyzes the condensation of pantoate with beta-alanine in an ATP-dependent reaction via a pantoyl-adenylate intermediate. The chain is Pantothenate synthetase from Albidiferax ferrireducens (strain ATCC BAA-621 / DSM 15236 / T118) (Rhodoferax ferrireducens).